We begin with the raw amino-acid sequence, 78 residues long: Defensin-like protein 173 (78 aa).

Residues 1–23 (MAKAPSPLVFPIIFLIIFALVEP) form the signal peptide. 4 disulfide bridges follow: Cys-27–Cys-71, Cys-34–Cys-56, Cys-40–Cys-65, and Cys-44–Cys-67.

It belongs to the DEFL family.

The protein localises to the secreted. In Arabidopsis thaliana (Mouse-ear cress), this protein is Defensin-like protein 173 (LCR63).